The following is a 65-amino-acid chain: VVYTDCTESGEDLCLCEGSNVCGEGNKCILGSDGEKNECVTGEGTPKPQSHNDGDFEEIPEEYLQ.

Positions 1–3 (VVY) are interaction with thrombin active site. Disulfide bonds link Cys-6–Cys-14, Cys-16–Cys-28, and Cys-22–Cys-39. A disordered region spans residues 32 to 65 (SDGEKNECVTGEGTPKPQSHNDGDFEEIPEEYLQ). Thr-45 carries an O-linked (GalNAc...) threonine glycan. Positions 55–65 (DFEEIPEEYLQ) are interaction with fibrinogen-binding exosite of thrombin. Residues 55-65 (DFEEIPEEYLQ) are compositionally biased toward acidic residues. Sulfotyrosine is present on Tyr-63.

It belongs to the protease inhibitor I14 (hirudin) family.

The protein resides in the secreted. Hirudin is a potent thrombin-specific protease inhibitor. It forms a stable non-covalent complex with alpha-thrombin, thereby abolishing its ability to cleave fibrinogen. This chain is Hirudin-3A', found in Hirudo medicinalis (Medicinal leech).